A 695-amino-acid chain; its full sequence is Elongation factor G 1 (695 aa).

The tr-type G domain maps to 6–284; that stretch reads SKVRNIGISA…AVETYLPCPT (279 aa). GTP is bound by residues 15–22, 82–86, and 136–139; these read AHIDSGKT, DTPGH, and NKCD.

This sequence belongs to the TRAFAC class translation factor GTPase superfamily. Classic translation factor GTPase family. EF-G/EF-2 subfamily.

The protein resides in the cytoplasm. Functionally, catalyzes the GTP-dependent ribosomal translocation step during translation elongation. During this step, the ribosome changes from the pre-translocational (PRE) to the post-translocational (POST) state as the newly formed A-site-bound peptidyl-tRNA and P-site-bound deacylated tRNA move to the P and E sites, respectively. Catalyzes the coordinated movement of the two tRNA molecules, the mRNA and conformational changes in the ribosome. The sequence is that of Elongation factor G 1 from Desulfotalea psychrophila (strain LSv54 / DSM 12343).